The following is a 77-amino-acid chain: uncharacterized protein (77 aa).

A run of 2 helical transmembrane segments spans residues 3 to 23 (FNFI…SFLF) and 35 to 55 (IGAI…VALL).

The protein resides in the cell membrane. This is an uncharacterized protein from Haemophilus influenzae (strain ATCC 51907 / DSM 11121 / KW20 / Rd).